Reading from the N-terminus, the 497-residue chain is Probable 26S proteasome regulatory subunit rpn3 (497 aa).

Positions 1–27 (MIDDQRDMQVDSVNQEENVDSGETKQN) are disordered. Residues 248 to 428 (IRYQYYLGRI…AFMASNEAMD (181 aa)) form the PCI domain. Positions 470–483 (GVEEARRRMDKEMA) are enriched in basic and acidic residues. Positions 470–497 (GVEEARRRMDKEMAEADLDDDEPDLGEF) are disordered. Residues 484-497 (EADLDDDEPDLGEF) show a composition bias toward acidic residues.

This sequence belongs to the proteasome subunit S3 family. The 26S proteasome is composed of a core protease, known as the 20S proteasome, capped at one or both ends by the 19S regulatory complex (RC). The RC is composed of at least 18 different subunits in two subcomplexes, the base and the lid, which form the portions proximal and distal to the 20S proteolytic core, respectively.

Acts as a regulatory subunit of the 26 proteasome which is involved in the ATP-dependent degradation of ubiquitinated proteins. This chain is Probable 26S proteasome regulatory subunit rpn3 (rpn3), found in Schizosaccharomyces pombe (strain 972 / ATCC 24843) (Fission yeast).